A 92-amino-acid chain; its full sequence is DNA-directed RNA polymerase subunit Rpo11 (92 aa).

This sequence belongs to the archaeal Rpo11/eukaryotic RPB11/RPC19 RNA polymerase subunit family. In terms of assembly, part of the 13-subunit RNA polymerase complex.

Its subcellular location is the cytoplasm. The enzyme catalyses RNA(n) + a ribonucleoside 5'-triphosphate = RNA(n+1) + diphosphate. DNA-dependent RNA polymerase (RNAP) catalyzes the transcription of DNA into RNA using the four ribonucleoside triphosphates as substrates. In Saccharolobus solfataricus (strain ATCC 35092 / DSM 1617 / JCM 11322 / P2) (Sulfolobus solfataricus), this protein is DNA-directed RNA polymerase subunit Rpo11.